A 25-amino-acid polypeptide reads, in one-letter code: Zinc metalloproteinase-disintegrin-like daborhagin-M (25 aa).

Positions 14–25 constitute a Peptidase M12B domain; it reads SYVELIITVDHS. Residue Glu-17 coordinates Ca(2+).

Belongs to the venom metalloproteinase (M12B) family. P-III subfamily. P-IIIa sub-subfamily. In terms of assembly, monomer. Requires Zn(2+) as cofactor. Post-translationally, N-glycosylated. Contains 16 disulfide bonds. As to expression, expressed by the venom gland.

It is found in the secreted. Its activity is regulated as follows. Inhibited by EDTA, EGTA and 1,10-phenanthroline. Addition of Mg(2+) or Ca(2+) increases the casein hydrolysis rate. Functionally, snake venom zinc metalloprotease that possesses high hemorrhagic activity (minimum hemorrhagic dose, MHD=0.86 ug) when subcutaneously injected into mice. Has potent fibrinogenolytic activity on alpha-chain of fibrinogen (FGA). Hydrolyzes model substrate (beta-chain of insulin) at Ala(14)-Leu(15) and Tyr(16)-Leu(17) followed by His(10)-Leu(11) and Phe(24)-Phe(25). The polypeptide is Zinc metalloproteinase-disintegrin-like daborhagin-M (Daboia siamensis (Eastern Russel's viper)).